The following is a 347-amino-acid chain: Protein RecA (347 aa).

67–74 (GPESSGKT) contacts ATP.

This sequence belongs to the RecA family.

Its subcellular location is the cytoplasm. Its function is as follows. Can catalyze the hydrolysis of ATP in the presence of single-stranded DNA, the ATP-dependent uptake of single-stranded DNA by duplex DNA, and the ATP-dependent hybridization of homologous single-stranded DNAs. It interacts with LexA causing its activation and leading to its autocatalytic cleavage. This Helicobacter pylori (strain P12) protein is Protein RecA.